The following is a 254-amino-acid chain: Small ribosomal subunit protein uS2 (254 aa).

The protein belongs to the universal ribosomal protein uS2 family.

In Oceanobacillus iheyensis (strain DSM 14371 / CIP 107618 / JCM 11309 / KCTC 3954 / HTE831), this protein is Small ribosomal subunit protein uS2.